The primary structure comprises 151 residues: Deoxyuridine 5'-triphosphate nucleotidohydrolase (151 aa).

Residues 70 to 72 (RSG), Asn83, 87 to 89 (LID), and Met97 each bind substrate.

Belongs to the dUTPase family. The cofactor is Mg(2+).

It carries out the reaction dUTP + H2O = dUMP + diphosphate + H(+). It participates in pyrimidine metabolism; dUMP biosynthesis; dUMP from dCTP (dUTP route): step 2/2. This enzyme is involved in nucleotide metabolism: it produces dUMP, the immediate precursor of thymidine nucleotides and it decreases the intracellular concentration of dUTP so that uracil cannot be incorporated into DNA. The polypeptide is Deoxyuridine 5'-triphosphate nucleotidohydrolase (Haemophilus influenzae (strain 86-028NP)).